Consider the following 495-residue polypeptide: MHEKSLTELRAALTARECSAVELAQLYLKRIEAANSLNAFIQVDPDLTLAQAKAADALLHTGHAGPLVGLPIAHKDVFVTKGWRSTAGSKMLSNYESPFDATVVARLQNAGMVCVGKTNMDEFAMGSSNENSYFGPVQNPWDVKAVPGGSSGGSAAAVAARLAPAATGTDTGGSIRQPASFSGITGIKPTYGRVSRYGMIAFASSLDQGGPMARSAADCATLLNAMAGFDGRDSTSLVRDDEDYTRYLGQPWKEDGAGKPLAGLRIGLPKEYFGAGLADDVRASIDAALKQYEALGATLVEVSLPKTELSIPVYYVIAPAEASSNLSRFDGVRFGHRAAEYRDLLDMYKKSRAEGFGPEVKRRILVGAYVLSHGYYDAYYLQAQKIRRIIAQDFQEAFRQCDVIMGPVAPTVAWDLGAKGDDPVQMYLADIYTLSVSLAGLPGMSVPCGFGAGANAQRPVGLQIIGNYFNEARMLQVADAFQRATDWHRKAPAGV.

Active-site charge relay system residues include K75 and S150. S174 serves as the catalytic Acyl-ester intermediate.

It belongs to the amidase family. GatA subfamily. In terms of assembly, heterotrimer of A, B and C subunits.

The enzyme catalyses L-glutamyl-tRNA(Gln) + L-glutamine + ATP + H2O = L-glutaminyl-tRNA(Gln) + L-glutamate + ADP + phosphate + H(+). In terms of biological role, allows the formation of correctly charged Gln-tRNA(Gln) through the transamidation of misacylated Glu-tRNA(Gln) in organisms which lack glutaminyl-tRNA synthetase. The reaction takes place in the presence of glutamine and ATP through an activated gamma-phospho-Glu-tRNA(Gln). The sequence is that of Glutamyl-tRNA(Gln) amidotransferase subunit A from Paraburkholderia xenovorans (strain LB400).